Here is a 256-residue protein sequence, read N- to C-terminus: Sec-independent protein translocase protein TatC (256 aa).

A run of 6 helical transmembrane segments spans residues 25 to 45, 77 to 97, 117 to 137, 158 to 178, 195 to 215, and 217 to 237; these read VICV…IYHF, AIVA…AFIA, ILFY…VFSF, FALA…AIIL, PYII…DVFS, and TLLA…ARFY.

Belongs to the TatC family. As to quaternary structure, the Tat system comprises two distinct complexes: a TatABC complex, containing multiple copies of TatA, TatB and TatC subunits, and a separate TatA complex, containing only TatA subunits. Substrates initially bind to the TatABC complex, which probably triggers association of the separate TatA complex to form the active translocon.

It localises to the cell inner membrane. Part of the twin-arginine translocation (Tat) system that transports large folded proteins containing a characteristic twin-arginine motif in their signal peptide across membranes. Together with TatB, TatC is part of a receptor directly interacting with Tat signal peptides. The polypeptide is Sec-independent protein translocase protein TatC (Haemophilus influenzae (strain ATCC 51907 / DSM 11121 / KW20 / Rd)).